The sequence spans 1189 residues: Lysine-specific demethylase hairless (1189 aa).

5 disordered regions span residues 1–40, 236–257, 349–377, 414–480, and 505–552; these read MEST…HHGP, HLQR…EMGA, EGGA…SHHT, AGSP…LQDP, and GEGG…RLST. Positions 239–254 are enriched in basic and acidic residues; it reads RAGEAERPSLHQRDGE. A compositionally biased stretch (basic and acidic residues) spans 457-469; that stretch reads KDVDSGQHDEQKG. An LXXLL motif 1 motif is present at residues 566–570; it reads LCRLL. The C6-type zinc-finger motif lies at 600–625; sequence CSRCHHGLFNTHWRCPRCSHRLCVAC. A disordered region spans residues 702-750; it reads GDAGQQKESTQKTPPTPQPSCNGDTHRTKSIKEETPDSAETPAEDRAGR. Residues 725–736 show a composition bias toward basic and acidic residues; that stretch reads DTHRTKSIKEET. Residues 758-762 carry the LXXLL motif 2 motif; sequence LCELL. A JmjC domain is found at 946-1157; that stretch reads DTSRVENLAA…LSAQLCHQGP (212 aa). Fe cation-binding residues include cysteine 1007, glutamate 1009, and histidine 1125.

Fe(2+) serves as cofactor. Strongest expression of isoforms 1 and 2 is seen in the small intestine, weaker expression in brain and colon, and trace expression is found in liver, pancreas, spleen, thymus, stomach, salivary gland, appendix and trachea. Isoform 1 is always the most abundant. Isoform 1 is exclusively expressed at low levels in kidney and testis. Isoform 2 is exclusively expressed at high levels in the skin.

It is found in the nucleus. The enzyme catalyses N(6),N(6)-dimethyl-L-lysyl(9)-[histone H3] + 2 2-oxoglutarate + 2 O2 = L-lysyl(9)-[histone H3] + 2 formaldehyde + 2 succinate + 2 CO2. Functionally, histone demethylase that specifically demethylates both mono- and dimethylated 'Lys-9' of histone H3. May act as a transcription regulator controlling hair biology (via targeting of collagens), neural activity, and cell cycle. The protein is Lysine-specific demethylase hairless (HR) of Homo sapiens (Human).